The chain runs to 687 residues: Chloride channel protein ClC-Ka (687 aa).

Transmembrane regions (helical) follow at residues Phe-52–Gly-72, Leu-94–Ile-114, Ile-161–Gly-181, Ala-204–Ile-224, and Tyr-236–Phe-256. Positions 259, 261, 278, and 281 each coordinate Ca(2+). A run of 6 helical transmembrane segments spans residues Ile-282 to Cys-302, Pro-325 to Gly-345, Phe-396 to Ala-416, Thr-417 to Gly-437, Val-458 to Val-478, and Leu-486 to Leu-506. Residues Ala-507–Lys-687 are Cytoplasmic-facing. 2 consecutive CBS domains span residues Met-551–Ser-609 and Cys-626–Lys-687.

The protein belongs to the chloride channel (TC 2.A.49) family. CLCNKA subfamily. Homodimer. Interacts with BSND. Expressed predominantly in the kidney. Expressed strongly in the cortical thick ascending limb and the distal convoluted tubule, with minor expression in the S3 segment of the proximal tubule and the cortical collecting tubule.

Its subcellular location is the basolateral cell membrane. It catalyses the reaction chloride(in) = chloride(out). It carries out the reaction bromide(in) = bromide(out). The enzyme catalyses nitrate(in) = nitrate(out). The catalysed reaction is iodide(out) = iodide(in). Its activity is regulated as follows. Activated by extracellular Ca(2+) and inhibited by extracellular acidic pH. Anion-selective channel permeable to small monovalent anions with ion selectivity for chloride &gt; bromide &gt; nitrate &gt; iodide. Forms a homodimeric channel where each subunit has its own ion conduction pathway. Conducts double-barreled currents controlled by two types of gates, two fast gates that control each subunit independently and a slow common gate that opens and shuts off both subunits simultaneously. Assembles with the regulatory subunit BSND/Barttin for sorting at the basolateral plasma membrane domain. CLCNKA:BSND channels are activated upon membrane hyperpolarization mostly controlled by fast gating. Mediates transepithelial chloride transport from the lumen to interstitial compartment along the thin ascending limb of Henle's loop, contributing to generation of hypertonic medullary interstitium as a countercurrent system to achieve urine concentration. Conducts chloride currents in the stria vascularis of the inner ear to establish the endocochlear potential necessary for normal hearing. The protein is Chloride channel protein ClC-Ka of Rattus norvegicus (Rat).